A 423-amino-acid chain; its full sequence is SH2 domain-containing protein 5 (423 aa).

In terms of domain architecture, PID spans 28–146 (AQYVGLLPCG…LLCRSFQLAY (119 aa)). An SH2 domain is found at 296 to 392 (WAFAGISRPC…LDMGRLNPTY (97 aa)). The interval 394 to 423 (EQDCGPLGRPPRTLRPLSHAKSEAELQGLG) is disordered. A compositionally biased stretch (low complexity) spans 398-410 (GPLGRPPRTLRPL).

Interacts with BCR.

It localises to the postsynaptic density. In terms of biological role, may be involved in synaptic plasticity regulation through the control of Rac-GTP levels. In Pongo abelii (Sumatran orangutan), this protein is SH2 domain-containing protein 5.